The sequence spans 375 residues: Putative type I specificity subunit S.MpnORF638P (375 aa).

Belongs to the type-I restriction system S methylase family. The methyltransferase is composed of M and S polypeptides.

In terms of biological role, the specificity (S) subunit of a type I methyltransferase (MTase); this subunit dictates DNA sequence specificity. The single R subunit has multiple frameshifts and is probably not expressed. The sequence is that of Putative type I specificity subunit S.MpnORF638P from Mycoplasma pneumoniae (strain ATCC 29342 / M129 / Subtype 1) (Mycoplasmoides pneumoniae).